A 227-amino-acid chain; its full sequence is Cytochrome c oxidase subunit 2 (227 aa).

At 1-14 (MAYPVQLGFQDAAS) the chain is on the mitochondrial intermembrane side. The helical transmembrane segment at 15 to 45 (PIMEELLYFHDHTLMIMFLISSLVLYIISLM) threads the bilayer. Residues 46–59 (LTTELIHTSTMDAQ) are Mitochondrial matrix-facing. Residues 60-87 (EVETVWTILPAVILILIALPSLRILYMM) form a helical membrane-spanning segment. Topologically, residues 88–227 (DEISTPSLTL…HFEEWLLSML (140 aa)) are mitochondrial intermembrane. 6 residues coordinate Cu cation: His-161, Cys-196, Glu-198, Cys-200, His-204, and Met-207. Glu-198 contributes to the Mg(2+) binding site.

Belongs to the cytochrome c oxidase subunit 2 family. As to quaternary structure, component of the cytochrome c oxidase (complex IV, CIV), a multisubunit enzyme composed of 14 subunits. The complex is composed of a catalytic core of 3 subunits MT-CO1, MT-CO2 and MT-CO3, encoded in the mitochondrial DNA, and 11 supernumerary subunits COX4I, COX5A, COX5B, COX6A, COX6B, COX6C, COX7A, COX7B, COX7C, COX8 and NDUFA4, which are encoded in the nuclear genome. The complex exists as a monomer or a dimer and forms supercomplexes (SCs) in the inner mitochondrial membrane with NADH-ubiquinone oxidoreductase (complex I, CI) and ubiquinol-cytochrome c oxidoreductase (cytochrome b-c1 complex, complex III, CIII), resulting in different assemblies (supercomplex SCI(1)III(2)IV(1) and megacomplex MCI(2)III(2)IV(2)). Found in a complex with TMEM177, COA6, COX18, COX20, SCO1 and SCO2. Interacts with TMEM177 in a COX20-dependent manner. Interacts with COX20. Interacts with COX16. Cu cation is required as a cofactor.

It localises to the mitochondrion inner membrane. The catalysed reaction is 4 Fe(II)-[cytochrome c] + O2 + 8 H(+)(in) = 4 Fe(III)-[cytochrome c] + 2 H2O + 4 H(+)(out). Its function is as follows. Component of the cytochrome c oxidase, the last enzyme in the mitochondrial electron transport chain which drives oxidative phosphorylation. The respiratory chain contains 3 multisubunit complexes succinate dehydrogenase (complex II, CII), ubiquinol-cytochrome c oxidoreductase (cytochrome b-c1 complex, complex III, CIII) and cytochrome c oxidase (complex IV, CIV), that cooperate to transfer electrons derived from NADH and succinate to molecular oxygen, creating an electrochemical gradient over the inner membrane that drives transmembrane transport and the ATP synthase. Cytochrome c oxidase is the component of the respiratory chain that catalyzes the reduction of oxygen to water. Electrons originating from reduced cytochrome c in the intermembrane space (IMS) are transferred via the dinuclear copper A center (CU(A)) of subunit 2 and heme A of subunit 1 to the active site in subunit 1, a binuclear center (BNC) formed by heme A3 and copper B (CU(B)). The BNC reduces molecular oxygen to 2 water molecules using 4 electrons from cytochrome c in the IMS and 4 protons from the mitochondrial matrix. In Eulemur macaco (Black lemur), this protein is Cytochrome c oxidase subunit 2 (MT-CO2).